We begin with the raw amino-acid sequence, 278 residues long: Protein FixR (278 aa).

40 to 64 (LLTGASRGIGHATAKLFSEAGWRII) contributes to the NAD(+) binding site. Ser-175 lines the substrate pocket. Tyr-189 serves as the catalytic Proton acceptor.

The protein belongs to the short-chain dehydrogenases/reductases (SDR) family.

The polypeptide is Protein FixR (fixR) (Bradyrhizobium diazoefficiens (strain JCM 10833 / BCRC 13528 / IAM 13628 / NBRC 14792 / USDA 110)).